Reading from the N-terminus, the 327-residue chain is 2-methoxy-6-polyprenyl-1,4-benzoquinol methylase, mitochondrial (327 aa).

A mitochondrion-targeting transit peptide spans 1 to 49 (MAAPRCCVLWRVCGRGWWRATGHCRLPGCHRSWPWATLGTRSLSQEKRA). S-adenosyl-L-methionine-binding positions include T117, D171, and 199-200 (DA).

Belongs to the class I-like SAM-binding methyltransferase superfamily. MenG/UbiE family. As to quaternary structure, component of a multi-subunit COQ enzyme complex, composed of at least COQ3, COQ4, COQ5, COQ6, COQ7 and COQ9. Interacts with PYURF; the interaction is direct, stabilizes COQ5 protein and associates PYURF with COQ enzyme complex.

The protein resides in the mitochondrion inner membrane. The enzyme catalyses 2-methoxy-6-(all-trans-decaprenyl)benzene-1,4-diol + S-adenosyl-L-methionine = 5-methoxy-2-methyl-3-(all-trans-decaprenyl)benzene-1,4-diol + S-adenosyl-L-homocysteine + H(+). The protein operates within cofactor biosynthesis; ubiquinone biosynthesis. Its function is as follows. Methyltransferase required for the conversion of 2-decaprenyl-6-methoxy-1,4-benzoquinol (DDMQH2) to 2-decaprenyl-3-methyl-6-methoxy-1,4-benzoquinol (DMQH2). The chain is 2-methoxy-6-polyprenyl-1,4-benzoquinol methylase, mitochondrial from Mus musculus (Mouse).